Consider the following 761-residue polypeptide: Zinc finger protein 711 (761 aa).

5 consecutive C2H2-type zinc fingers follow at residues 383-408, 414-436, 476-499, 505-527, and 533-556; these read YPCH…HPDH, YQCT…LESH, HKCK…LAVH, HVCV…MRTH, and FHCQ…KSKH. The C2H2-type 6; atypical zinc-finger motif lies at 562–584; that stretch reads FKCGHCPQAFADDKELQRHAEIF. Positions 564, 567, and 580 each coordinate Zn(2+). 6 consecutive C2H2-type zinc fingers follow at residues 590-613, 619-641, 647-670, 676-698, 704-727, and 733-755; these read HQCP…ISVH, HKCD…SETH, HQCR…LSVH, FKCK…MKTH, YQCQ…ISIH, and HRCD…IMRH.

Belongs to the krueppel C2H2-type zinc-finger protein family. As to expression, present in ovary and brain but not in other tissues (at protein level).

Its subcellular location is the nucleus. It localises to the cytoplasm. Its function is as follows. Transcription regulator required for brain development. Probably acts as a transcription factor that binds to the promoter of target genes, leading to activate their expression. The polypeptide is Zinc finger protein 711 (znf711) (Danio rerio (Zebrafish)).